Reading from the N-terminus, the 778-residue chain is ATP-dependent RNA helicase dbp7 (778 aa).

Residues 20–144 (QTKIKGGSWR…PMEDAKPTNA (125 aa)) are disordered. Basic and acidic residues predominate over residues 47-58 (RTADGDGNKDGN). Over residues 61–72 (GPRNPNRIQVSG) the composition is skewed to polar residues. Residues 92 to 110 (QAHGQGSGQSKGPKKGQGG) show a composition bias toward gly residues. Residues 125–140 (NAVEEDKNDEPMEDAK) show a composition bias toward basic and acidic residues. The Q motif motif lies at 151 to 180 (DTFTNLGLSPTLAAHLLTKLELKAPTAIQK). The Helicase ATP-binding domain maps to 184–385 (TQLLKEETDA…EISLKDAVHI (202 aa)). 197–204 (AETGSGKT) is a binding site for ATP. Residues 321–324 (DEGD) carry the DEAD box motif. The region spanning 411 to 625 (QLKQSYAIVA…ALTRSTTDDI (215 aa)) is the Helicase C-terminal domain. Over residues 470–479 (LEGDNPDEGS) the composition is skewed to acidic residues. Disordered regions lie at residues 470–503 (LEGD…TVAP) and 700–778 (GKIN…FNLA). 2 stretches are compositionally biased toward basic and acidic residues: residues 480-492 (DSEH…KEKP) and 709-724 (PGKE…ERKS).

Belongs to the DEAD box helicase family. DDX31/DBP7 subfamily.

It localises to the nucleus. The protein resides in the nucleolus. The enzyme catalyses ATP + H2O = ADP + phosphate + H(+). Its function is as follows. ATP-binding RNA helicase involved in the biogenesis of 60S ribosomal subunits and is required for the normal formation of 25S and 5.8S rRNAs. This Emericella nidulans (strain FGSC A4 / ATCC 38163 / CBS 112.46 / NRRL 194 / M139) (Aspergillus nidulans) protein is ATP-dependent RNA helicase dbp7 (dbp7).